Here is a 473-residue protein sequence, read N- to C-terminus: Response regulator protein FleR (473 aa).

The Response regulatory domain occupies 4-118 (KVLLVEDDRA…ALLDLVARHA (115 aa)). Position 53 is a 4-aspartylphosphate (D53). One can recognise a Sigma-54 factor interaction domain in the interval 130–359 (PVALEPASRQ…LDNAIQRALI (230 aa)). ATP contacts are provided by residues 158-165 (GESGTGKE) and 221-230 (ADGGTILLDE).

Its function is as follows. Member of the two-component regulatory system FleS/FleR that regulates the expression of multiple genes involved in flagellar synthesis, adhesion, swarming, motility and antibiotic resistance. May function as a transcriptional activator by direct binding to a cis-acting sequence upstream of the target genes. This Pseudomonas aeruginosa (strain ATCC 15692 / DSM 22644 / CIP 104116 / JCM 14847 / LMG 12228 / 1C / PRS 101 / PAO1) protein is Response regulator protein FleR.